A 70-amino-acid polypeptide reads, in one-letter code: DNA gyrase inhibitor YacG (70 aa).

Zn(2+) is bound by residues cysteine 9, cysteine 12, cysteine 28, and cysteine 32. The segment at 43–70 (ESRKIPGSSIDPESIVTSNNKQDNVDEQ) is disordered.

It belongs to the DNA gyrase inhibitor YacG family. As to quaternary structure, interacts with GyrB. Requires Zn(2+) as cofactor.

In terms of biological role, inhibits all the catalytic activities of DNA gyrase by preventing its interaction with DNA. Acts by binding directly to the C-terminal domain of GyrB, which probably disrupts DNA binding by the gyrase. The polypeptide is DNA gyrase inhibitor YacG (Legionella pneumophila (strain Lens)).